We begin with the raw amino-acid sequence, 210 residues long: ER membrane protein complex subunit 8 (210 aa).

The 147-residue stretch at 4 to 150 (VKLTTQAYCK…IHVYEHHENR (147 aa)) folds into the MPN domain.

Belongs to the EMC8/EMC9 family. Component of the ER membrane protein complex (EMC). EMC8 and EMC9 are mutually exclusive subunits of the EMC complex. As to expression, expressed in liver, pancreas, heart, lung, kidney, brain, skeletal muscle, and placenta. Expression levels are highest in pancreas and moderate in heart, skeletal muscle, and placenta.

It is found in the endoplasmic reticulum membrane. Part of the endoplasmic reticulum membrane protein complex (EMC) that enables the energy-independent insertion into endoplasmic reticulum membranes of newly synthesized membrane proteins. Preferentially accommodates proteins with transmembrane domains that are weakly hydrophobic or contain destabilizing features such as charged and aromatic residues. Involved in the cotranslational insertion of multi-pass membrane proteins in which stop-transfer membrane-anchor sequences become ER membrane spanning helices. It is also required for the post-translational insertion of tail-anchored/TA proteins in endoplasmic reticulum membranes. By mediating the proper cotranslational insertion of N-terminal transmembrane domains in an N-exo topology, with translocated N-terminus in the lumen of the ER, controls the topology of multi-pass membrane proteins like the G protein-coupled receptors. By regulating the insertion of various proteins in membranes, it is indirectly involved in many cellular processes. In Homo sapiens (Human), this protein is ER membrane protein complex subunit 8 (EMC8).